The chain runs to 334 residues: Holliday junction branch migration complex subunit RuvB (334 aa).

Positions M1 to Y181 are large ATPase domain (RuvB-L). ATP contacts are provided by residues I20, R21, G62, K65, T66, T67, E128–Y130, R171, Y181, and R218. T66 contributes to the Mg(2+) binding site. The tract at residues S182–N252 is small ATPAse domain (RuvB-S). Residues K255 to N334 form a head domain (RuvB-H) region. Residues R310 and R315 each coordinate DNA.

The protein belongs to the RuvB family. In terms of assembly, homohexamer. Forms an RuvA(8)-RuvB(12)-Holliday junction (HJ) complex. HJ DNA is sandwiched between 2 RuvA tetramers; dsDNA enters through RuvA and exits via RuvB. An RuvB hexamer assembles on each DNA strand where it exits the tetramer. Each RuvB hexamer is contacted by two RuvA subunits (via domain III) on 2 adjacent RuvB subunits; this complex drives branch migration. In the full resolvosome a probable DNA-RuvA(4)-RuvB(12)-RuvC(2) complex forms which resolves the HJ.

The protein resides in the cytoplasm. It carries out the reaction ATP + H2O = ADP + phosphate + H(+). Functionally, the RuvA-RuvB-RuvC complex processes Holliday junction (HJ) DNA during genetic recombination and DNA repair, while the RuvA-RuvB complex plays an important role in the rescue of blocked DNA replication forks via replication fork reversal (RFR). RuvA specifically binds to HJ cruciform DNA, conferring on it an open structure. The RuvB hexamer acts as an ATP-dependent pump, pulling dsDNA into and through the RuvAB complex. RuvB forms 2 homohexamers on either side of HJ DNA bound by 1 or 2 RuvA tetramers; 4 subunits per hexamer contact DNA at a time. Coordinated motions by a converter formed by DNA-disengaged RuvB subunits stimulates ATP hydrolysis and nucleotide exchange. Immobilization of the converter enables RuvB to convert the ATP-contained energy into a lever motion, pulling 2 nucleotides of DNA out of the RuvA tetramer per ATP hydrolyzed, thus driving DNA branch migration. The RuvB motors rotate together with the DNA substrate, which together with the progressing nucleotide cycle form the mechanistic basis for DNA recombination by continuous HJ branch migration. Branch migration allows RuvC to scan DNA until it finds its consensus sequence, where it cleaves and resolves cruciform DNA. The sequence is that of Holliday junction branch migration complex subunit RuvB from Acinetobacter baumannii (strain AB307-0294).